Here is a 175-residue protein sequence, read N- to C-terminus: Transcription factor E (175 aa).

The HTH TFE/IIEalpha-type domain maps to 3–88 (ENPLIQQVLF…TWKPSLEKVP (86 aa)).

This sequence belongs to the TFE family. As to quaternary structure, monomer. Interaction with RNA polymerase subunits RpoF and RpoE is necessary for Tfe stimulatory transcription activity. Able to interact with Tbp and RNA polymerase in the absence of DNA promoter. Interacts both with the preinitiation and elongation complexes.

Functionally, transcription factor that plays a role in the activation of archaeal genes transcribed by RNA polymerase. Facilitates transcription initiation by enhancing TATA-box recognition by TATA-box-binding protein (Tbp), and transcription factor B (Tfb) and RNA polymerase recruitment. Not absolutely required for transcription in vitro, but particularly important in cases where Tbp or Tfb function is not optimal. It dynamically alters the nucleic acid-binding properties of RNA polymerases by stabilizing the initiation complex and destabilizing elongation complexes. Seems to translocate with the RNA polymerase following initiation and acts by binding to the non template strand of the transcription bubble in elongation complexes. This Methanococcus maripaludis (strain DSM 14266 / JCM 13030 / NBRC 101832 / S2 / LL) protein is Transcription factor E.